The following is a 160-amino-acid chain: Transcription antitermination protein NusB (160 aa).

This sequence belongs to the NusB family.

Its function is as follows. Involved in transcription antitermination. Required for transcription of ribosomal RNA (rRNA) genes. Binds specifically to the boxA antiterminator sequence of the ribosomal RNA (rrn) operons. This Rhizobium meliloti (strain 1021) (Ensifer meliloti) protein is Transcription antitermination protein NusB.